The primary structure comprises 419 residues: ATP-dependent RNA helicase RhlB (419 aa).

The Q motif signature appears at 9 to 37 (QRFSDLALHRSVQQAIKEKGFEFCTPIQA). In terms of domain architecture, Helicase ATP-binding spans 40–217 (LPITLKGQDI…FEHMNDPQYV (178 aa)). ATP is bound at residue 53-60 (AQTGTGKT). A DEAD box motif is present at residues 163-166 (DEAD). Residues 241–388 (KMALLMTLLE…VSQYDAKALI (148 aa)) form the Helicase C-terminal domain.

The protein belongs to the DEAD box helicase family. RhlB subfamily. Component of the RNA degradosome, which is a multiprotein complex involved in RNA processing and mRNA degradation.

Its subcellular location is the cytoplasm. It carries out the reaction ATP + H2O = ADP + phosphate + H(+). Its function is as follows. DEAD-box RNA helicase involved in RNA degradation. Has RNA-dependent ATPase activity and unwinds double-stranded RNA. This Histophilus somni (strain 129Pt) (Haemophilus somnus) protein is ATP-dependent RNA helicase RhlB.